The primary structure comprises 588 residues: Glutathione/L-cysteine transport system ATP-binding/permease protein CydD (588 aa).

The Cytoplasmic portion of the chain corresponds to 1-15; sequence MNKSRQKELTRWLKQ. Helical transmembrane passes span 16–36 and 37–57; these read QSVI…VSGI and LIIA…MENI. Positions 20–306 constitute an ABC transmembrane type-1 domain; the sequence is SQRWLNISRL…APEFFQPLRD (287 aa). The Cytoplasmic portion of the chain corresponds to 58-136; sequence PREALLLPFT…LEQIDDMHDY (79 aa). Residues 137–157 traverse the membrane as a helical segment; it reads YARYLPQMALAVSVPLLIVVA. Topologically, residues 158-161 are periplasmic; the sequence is IFPS. A helical membrane pass occupies residues 162–182; the sequence is NWAAALILLGTAPLIPLFMAL. Over 183-249 the chain is Cytoplasmic; that stretch reads VGMGAADANR…MEVLRLAFLS (67 aa). Residues 250-270 form a helical membrane-spanning segment; it reads SGILEFFTSLSIALVAVYFGF. The Periplasmic portion of the chain corresponds to 271–276; that stretch reads SYLGEL. A helical transmembrane segment spans residues 277–297; the sequence is DFGHYDTGVTLAAGFLALILA. The Cytoplasmic segment spans residues 298–573; the sequence is PEFFQPLRDL…QGRYAELSVA (276 aa). One can recognise an ABC transporter domain in the interval 339 to 572; sequence EAELASTDPV…EQGRYAELSV (234 aa). 373–380 contributes to the ATP binding site; it reads LPAGQRAV.

This sequence belongs to the ABC transporter superfamily. Cysteine exporter (TC 3.A.1.129.1) family. In terms of assembly, forms a heterodimer with CydC.

The protein resides in the cell inner membrane. It catalyses the reaction L-cysteine(in) + ATP + H2O = L-cysteine(out) + ADP + phosphate + H(+). The enzyme catalyses glutathione(in) + ATP + H2O = glutathione(out) + ADP + phosphate + H(+). Its activity is regulated as follows. ATPase activity is stimulated by various thiol compounds. The presence of heme leads to a further enhancement of thiol-stimulated ATPase activity, although a large excess of heme inhibits activity. Glutathione transport is inhibited by sodium orthovanadate, an inhibitor of ABC-type transport systems, but not by the proton ionophore carbonyl cyanide m-chlorophenylhydrazone (CCCP). In terms of biological role, part of the ABC transporter complex CydDC that exports the reduced low-molecular-weight thiols cysteine and glutathione to the periplasm. Export of these thiol-containing redox-active molecules may be crucial for redox homeostasis in the periplasm, permitting correct assembly of various respiratory complexes and formation of correct disulfide bonds in periplasmic and secreted proteins. CydD contains transmembrane domains (TMD), which form a pore in the inner membrane, and an ATP-binding domain (NBD), which is responsible for energy generation. Required for the assembly of functional cytochrome bd-type quinol oxidases and periplasmic c-type cytochromes. Overexpression of CydDC under anaerobic conditions also results in the formation of a heme biosynthesis-derived pigment, P-574. CydDC binds heme b, but heme is probably not transported by the complex and instead has a role in regulating ATPase activity. Its function is as follows. Conversely, a more recent study suggests an alternative function of CydDC: authors suggest that CydDC does not mediate the export of L-cysteine but rather reduces cytoplasmic L-cystine to L-cysteine. The principle function of CydDC would be to maintain the reduced state of cytoplasmic L-cysteine, thereby providing an important connection between sulfur metabolism, oxidative stress and resistance to antibiotics. This chain is Glutathione/L-cysteine transport system ATP-binding/permease protein CydD, found in Escherichia coli (strain K12).